Reading from the N-terminus, the 244-residue chain is Transcriptional activator protein Anr (244 aa).

21–149 (APLCLPLSLN…RVMSREIRDD (129 aa)) contributes to the a nucleoside 3',5'-cyclic phosphate binding site. Residues 159–232 (KTADERIATF…GKEVHILDPI (74 aa)) form the HTH crp-type domain. A DNA-binding region (H-T-H motif) is located at residues 192–211 (RNEIGNYLGLAVETVSRVFT).

Its function is as follows. Transcriptional activator of anaerobic gene expression. Regulates the expression of the components of the hydrogen cyanide synthase (HcnABC) in a positive manner. May also act as an iron sensor. The polypeptide is Transcriptional activator protein Anr (Pseudomonas protegens (strain DSM 19095 / LMG 27888 / CFBP 6595 / CHA0)).